The following is an 85-amino-acid chain: Photosystem I reaction center subunit PsaK (85 aa).

2 helical membrane passes run 12-34 and 54-76; these read TVTW…IAVG and GGMG…IGAI.

The protein belongs to the PsaG/PsaK family.

The protein resides in the cellular thylakoid membrane. This chain is Photosystem I reaction center subunit PsaK, found in Parasynechococcus marenigrum (strain WH8102).